The following is a 560-amino-acid chain: Cytosolic purine 5'-nucleotidase (560 aa).

The active-site Nucleophile is Asp52. 2 residues coordinate IMP: Asp52 and Asp54. Residues Asp52 and Asp54 each contribute to the Mg(2+) site. Catalysis depends on Asp54, which acts as the Proton donor. Residues Arg144 and Asn154 each contribute to the ATP site. 7 residues coordinate IMP: Arg202, Asp206, Lys215, Thr249, Asn250, Ser251, and Lys292. Asp351 contributes to the Mg(2+) binding site. Ser418 is subject to Phosphoserine. ATP contacts are provided by Gln453 and Arg456. A phosphoserine mark is found at Ser502, Ser511, and Ser527. The interval 541-560 is disordered; the sequence is PQEITHCHDEDDDEEEEEEE. The required for tetramer assembly stretch occupies residues 548–560; the sequence is HDEDDDEEEEEEE. Positions 550 to 560 are enriched in acidic residues; it reads EDDDEEEEEEE.

This sequence belongs to the 5'(3')-deoxyribonucleotidase family. In terms of assembly, homotetramer. It depends on Mg(2+) as a cofactor.

The protein localises to the cytoplasm. It localises to the cytosol. It carries out the reaction a ribonucleoside 5'-phosphate + H2O = a ribonucleoside + phosphate. The catalysed reaction is a 2'-deoxyribonucleoside + a ribonucleoside 5'-phosphate = a ribonucleoside + a 2'-deoxyribonucleoside 5'-phosphate. The enzyme catalyses IMP + H2O = inosine + phosphate. It catalyses the reaction GMP + H2O = guanosine + phosphate. It carries out the reaction dIMP + H2O = 2'-deoxyinosine + phosphate. The catalysed reaction is dGMP + H2O = 2'-deoxyguanosine + phosphate. The enzyme catalyses XMP + H2O = xanthosine + phosphate. It catalyses the reaction inosine + GMP = guanosine + IMP. It carries out the reaction dGMP + inosine = 2'-deoxyguanosine + IMP. The catalysed reaction is dIMP + inosine = 2'-deoxyinosine + IMP. The enzyme catalyses inosine + UMP = uridine + IMP. It catalyses the reaction inosine + CMP = cytidine + IMP. It carries out the reaction inosine + AMP = IMP + adenosine. Allosterically activated by various compounds including ATP, 2,3-BPG/2,3-Bisphosphoglyceric acid and Ap4A/P1,P4-bis(5'-adenosyl) tetraphosphate. Binding of an allosteric activator is a prerequisiste to magnesium and substrate binding. Inhibited by inorganic phosphate. In terms of biological role, broad specificity cytosolic 5'-nucleotidase that catalyzes the dephosphorylation of 6-hydroxypurine nucleoside 5'-monophosphates. In addition, possesses a phosphotransferase activity by which it can transfer a phosphate from a donor nucleoside monophosphate to an acceptor nucleoside, preferably inosine, deoxyinosine and guanosine. Has the highest activities for IMP and GMP followed by dIMP, dGMP and XMP. Could also catalyze the transfer of phosphates from pyrimidine monophosphates but with lower efficiency. Through these activities regulates the purine nucleoside/nucleotide pools within the cell. This Rattus norvegicus (Rat) protein is Cytosolic purine 5'-nucleotidase.